A 66-amino-acid chain; its full sequence is Large ribosomal subunit protein bL35 (66 aa).

Composition is skewed to basic residues over residues 1–15 and 27–40; these read MPKL…KRFK and AGKR…TKKQ. The tract at residues 1 to 40 is disordered; the sequence is MPKLKTKSGAKKRFKVTGTGKVMSAHAGKRHGMIKRTKKQ.

Belongs to the bacterial ribosomal protein bL35 family.

The polypeptide is Large ribosomal subunit protein bL35 (Rhodopseudomonas palustris (strain BisA53)).